The sequence spans 84 residues: Small ribosomal subunit protein uS17 (84 aa).

The protein belongs to the universal ribosomal protein uS17 family. Part of the 30S ribosomal subunit.

Its function is as follows. One of the primary rRNA binding proteins, it binds specifically to the 5'-end of 16S ribosomal RNA. The protein is Small ribosomal subunit protein uS17 of Citrobacter koseri (strain ATCC BAA-895 / CDC 4225-83 / SGSC4696).